Here is an 861-residue protein sequence, read N- to C-terminus: Piwi-like protein 1 (861 aa).

The span at 1-13 (MTGRARARARGRA) shows a compositional bias: basic residues. The interval 1 to 64 (MTGRARARAR…TAGGTAKSQG (64 aa)) is disordered. Arg14 carries the post-translational modification Omega-N-methylarginine; by PRMT5; alternate. A Symmetric dimethylarginine; by PRMT5; alternate modification is found at Arg14. Polar residues predominate over residues 17–27 (ETAQLVGSTAS). The residue at position 49 (Arg49) is an Omega-N-methylarginine; by PRMT5. Arg53 carries the post-translational modification Omega-N-methylarginine; alternate. A Symmetric dimethylarginine; alternate modification is found at Arg53. The D-box signature appears at 217–224 (RRLLKIMN). The PAZ domain occupies 278-391 (TVLDFMFNFY…LIPELCYLTG (114 aa)). Residues 316 to 318 (TYR) form a required for binding 2'-O-methylated 3'-end of piRNAs region. Arg370 bears the Omega-N-methylarginine; by PRMT5 mark. The MID region stretch occupies residues 479–615 (SKETRGAPLI…LQMNCKMGGE (137 aa)). Positions 555–847 (IVVCLLSSNR…LAFLVGQSIH (293 aa)) constitute a Piwi domain. Catalysis depends on residues Asp632, Glu670, Asp702, and His836.

The protein belongs to the argonaute family. Piwi subfamily. Interacts (via Piwi domain) with DICER1, suggesting that it forms ribonucleoprotein RISC complexes; this interaction is regulated by HSP90AB1 activity. Interacts with MAEL, KIF17, PABPC1, PRMT5 and WDR77. Interacts (when methylated on arginine residues) with TDRD1, TDRKH/TDRD2, RNF17/TDRD4, TDRD6, TDRD7 and TDRD9. Interacts with CLOCK. Interacts with MOV10L1. Interacts with ANAPC10; interaction oly takes place following piRNA-binding. Interacts with RNF8; leading to sequester RNF8 in the cytoplasm. Interacts with TEX19. Mg(2+) serves as cofactor. In terms of processing, arginine methylation by PRMT5 is required for the interaction with Tudor domain-containing protein (TDRD1, TDRKH/TDRD2, RNF17/TDRD4, TDRD6, TDRD7 and TDRD9) and subsequent localization to the meiotic nuage, also named P granule. Ubiquitinated by the anaphase promoting complex/cyclosome (APC/C) in late spermatids, leading to its degradation. Ubiquitination only takes place following piRNA-binding in adult testis. Ubiquitination and degradation in late spermatogenesis by APC/C is probably required to release RNF8 from the cytoplasm and promote histone to protamine exchange by RNF8. As to expression, expressed in spermatocytes and spermatids. Also detected in prostate cancer (at protein level). Detected in most fetal and adult tissues. Expressed in testes, specifically in germline cells; detected in spermatocytes and spermatids during spermatogenesis. Increased expression in testicular tumors originating from embryonic germ cells with retention of germ cells phenotype. No expression in testicular tumors of somatic origin, such as Sertoli cell and Leydig cell tumors. Overexpressed in gastric cancer cells. Isoform 3: Ubiquitously expressed, and specifically in CD34(+) hematopoietic progenitor cells but not in more differentiated cells.

Its subcellular location is the cytoplasm. Its function is as follows. Endoribonuclease that plays a central role in postnatal germ cells by repressing transposable elements and preventing their mobilization, which is essential for the germline integrity. Acts via the piRNA metabolic process, which mediates the repression of transposable elements during meiosis by forming complexes composed of piRNAs and Piwi proteins and governs the methylation and subsequent repression of transposons. Directly binds methylated piRNAs, a class of 24 to 30 nucleotide RNAs that are generated by a Dicer-independent mechanism and are primarily derived from transposons and other repeated sequence elements. Strongly prefers a uridine in the first position of their guide (g1U preference, also named 1U-bias). Not involved in the piRNA amplification loop, also named ping-pong amplification cycle. Acts as an endoribonuclease that cleaves transposon messenger RNAs. Besides their function in transposable elements repression, piRNAs are probably involved in other processes during meiosis such as translation regulation. Probable component of some RISC complex, which mediates RNA cleavage and translational silencing. Also plays a role in the formation of chromatoid bodies and is required for some miRNAs stability. Required to sequester RNF8 in the cytoplasm until late spermatogenesis; RNF8 being released upon ubiquitination and degradation of PIWIL1. May be a negative developmental regulator. The polypeptide is Piwi-like protein 1 (PIWIL1) (Homo sapiens (Human)).